The primary structure comprises 789 residues: Aryl hydrocarbon receptor nuclear translocator (789 aa).

Over residues 1–14 (MAATTANPEMTSDV) the composition is skewed to polar residues. The interval 1–97 (MAATTANPEM…RLARENHSEI (97 aa)) is disordered. At Ala-2 the chain carries N-acetylalanine. A compositionally biased stretch (gly residues) spans 26-35 (SGPGIQGGGA). A Glycyl lysine isopeptide (Lys-Gly) (interchain with G-Cter in SUMO2) cross-link involves residue Lys-58. Over residues 60–97 (LRCDDDQMSNDKERFARSDDEQSSADKERLARENHSEI) the composition is skewed to basic and acidic residues. Residue Ser-77 is modified to Phosphoserine. Residues 88-128 (RLARENHSEIERRRRNKMTAYITELSDMVPTCSALARKPDK) are DNA-binding. In terms of domain architecture, bHLH spans 89–142 (LARENHSEIERRRRNKMTAYITELSDMVPTCSALARKPDKLTILRMAVSHMKSL). Residues 112-168 (LSDMVPTCSALARKPDKLTILRMAVSHMKSLRGTGNTSTDGSYKPSFLTDQELKHLI) form a required for heterodimer formation with HIF1A region. The segment at 112–264 (LSDMVPTCSA…MCMGSRRSFI (153 aa)) is required for heterodimer formation with EPAS1. 2 consecutive PAS domains span residues 161–235 (DQEL…LTGR) and 349–419 (PNCT…VKLK). Positions 167-171 (LILEA) are mediates the transcription activity and dimerization of the AHR:ARNT complex. The PAC domain occupies 424 to 467 (SVMFRFRSKNQEWLWMRTSSFTFQNPYSDEIEYIICTNTNVKNS). Polar residues predominate over residues 465 to 481 (KNSSQEPRPTLSNTIQR). Disordered stretches follow at residues 465-492 (KNSSQEPRPTLSNTIQRPQLGPTANLPL) and 672-789 (TPSS…PFSE). Positions 672–696 (TPSSFSSMSLPGAPTASPGAAAYPS) are enriched in low complexity. The segment covering 708–719 (TGQTAGQFQTRT) has biased composition (polar residues). 2 stretches are compositionally biased toward low complexity: residues 723-733 (VGVWPQWQGQQ) and 743-756 (QHVQQPPAQQPGQP).

Monomer. Homodimer only upon binding to a DNA. Efficient DNA binding requires dimerization with another bHLH protein. Interacts with TACC3. Interacts with HIF1A, EPAS1, NPAS1 and NPAS3; forms a heterodimer that binds core DNA sequence 5'-TACGTG-3' within the hypoxia response element (HRE) of target gene promoters. Forms a heterodimer with AHRR, as well as with other bHLH proteins. Interacts with NOCA7. Interacts with TACC3. Interacts with AHR; the heterodimer ARNT:AHR binds to core DNA sequence 5'-TGCGTG-3' within the dioxin response element (DRE) of target gene promoters and activates their transcription. Interacts with SIM1 and NPAS4.

It localises to the nucleus. In terms of biological role, required for activity of the AHR. Upon ligand binding, AHR translocates into the nucleus, where it heterodimerizes with ARNT and induces transcription by binding to xenobiotic response elements (XRE). Not required for the ligand-binding subunit to translocate from the cytosol to the nucleus after ligand binding. The complex initiates transcription of genes involved in the regulation of a variety of biological processes, including angiogenesis, hematopoiesis, drug and lipid metabolism, cell motility and immune modulation. The heterodimer binds to core DNA sequence 5'-TACGTG-3' within the hypoxia response element (HRE) of target gene promoters and functions as a transcriptional regulator of the adaptive response to hypoxia. The heterodimer ARNT:AHR binds to core DNA sequence 5'-TGCGTG-3' within the dioxin response element (DRE) of target gene promoters and activates their transcription. This is Aryl hydrocarbon receptor nuclear translocator from Homo sapiens (Human).